Reading from the N-terminus, the 408-residue chain is Zinc-regulated transporter 1 (408 aa).

A run of 3 helical transmembrane segments spans residues 64-84 (IGAI…PLVL), 101-121 (LFAR…HLLA), and 141-161 (WAPG…VLLN). Residues T234 and T237 each carry the phosphothreonine modification. 5 helical membrane passes run 254-274 (FIIL…TTAV), 279-299 (FKTL…GLGS), 315-335 (WVLG…GLGV), 351-371 (GVLD…ELLA), and 387-407 (LIYL…LGKW).

It belongs to the ZIP transporter (TC 2.A.5) family.

Its subcellular location is the endoplasmic reticulum membrane. Functionally, high-affinity zinc transport protein. Regulates intracellular zinc levels. This chain is Zinc-regulated transporter 1 (zrt1), found in Schizosaccharomyces pombe (strain 972 / ATCC 24843) (Fission yeast).